Here is a 1176-residue protein sequence, read N- to C-terminus: Chromosome partition protein Smc (1176 aa).

32–39 (PNGCGKSN) contributes to the ATP binding site. Positions 169–506 (GVSRYKERRR…VKLQEDVQKQ (338 aa)) form a coiled coil. The SMC hinge domain occupies 521–623 (LGRLWQKLHI…TAPDLGQALA (103 aa)). 2 coiled-coil regions span residues 653 to 947 (DSEQ…LAAM) and 987 to 1024 (ERKE…LQAT).

Belongs to the SMC family. In terms of assembly, homodimer.

It is found in the cytoplasm. Functionally, required for chromosome condensation and partitioning. The protein is Chromosome partition protein Smc of Bordetella petrii (strain ATCC BAA-461 / DSM 12804 / CCUG 43448).